A 609-amino-acid polypeptide reads, in one-letter code: MFS siderochrome iron transporter 1 (609 aa).

Basic and acidic residues-rich tracts occupy residues Met1–Thr17 and Pro25–Pro34. The interval Met1 to Val69 is disordered. A run of 14 helical transmembrane segments spans residues Leu81 to Ile101, Leu125 to Ala145, Ala154 to Ser174, Ala182 to Ala202, Ser220 to Val240, Trp245 to Leu265, Val300 to Ala320, Thr329 to Trp349, Ser368 to Phe390, Tyr407 to Ile427, Phe432 to Ile452, Ile469 to Ala489, Ala496 to Ile516, and Ile573 to Leu593.

This sequence belongs to the major facilitator superfamily.

Its subcellular location is the cell membrane. Functionally, major facilitator transporter involved in extracellular siderophore uptake. Gibberella zeae produces extracellular coprogen-type siderophores as well as the intracellular siderophore ferricrocin. The role of extracellular siderophores is to supply iron to the fungus during plant infection, and the intracellular ferricrocin is required for intracellular iron distribution and storage with a crucial role in ascus and ascospore development. This chain is MFS siderochrome iron transporter 1, found in Gibberella zeae (strain ATCC MYA-4620 / CBS 123657 / FGSC 9075 / NRRL 31084 / PH-1) (Wheat head blight fungus).